Reading from the N-terminus, the 352-residue chain is uncharacterized protein (352 aa).

This is an uncharacterized protein from Acanthamoeba polyphaga mimivirus (APMV).